Here is a 2690-residue protein sequence, read N- to C-terminus: Non-reducing polyketide synthase pigA (2690 aa).

One can recognise a Starter acyltransferase (SAT) domain in the interval N96–F211. The Nucleophile; for transacylase activity role is filled by C140. Catalysis depends on H258, which acts as the Proton donor/acceptor; for transacylase activity. The region spanning E388–Q804 is the Ketosynthase family 3 (KS3) domain. Residues C553, H688, and H727 each act as for beta-ketoacyl synthase activity in the active site. Residues F915 to S1182 form the Malonyl-CoA:ACP transacylase (MAT) domain. An N-terminal hotdog fold region spans residues L1296–D1426. The PKS/mFAS DH domain maps to L1296–S1602. Residues L1323–S1600 form a product template (PT) domain region. The active-site Proton acceptor; for dehydratase activity is the H1327. Residues A1454–S1602 form a C-terminal hotdog fold region. Catalysis depends on D1510, which acts as the Proton donor; for dehydratase activity. In terms of domain architecture, Carrier 1 spans P1657–L1731. S1691 bears the O-(pantetheine 4'-phosphoryl)serine mark. The disordered stretch occupies residues L1731–A1764. Residues G1736–S1751 are compositionally biased toward acidic residues. Positions P1755–A1764 are enriched in polar residues. A Carrier 2 domain is found at S1768 to S1842. The residue at position 1802 (S1802) is an O-(pantetheine 4'-phosphoryl)serine. Residues Q1948–A2255 form a methyltransferase domain region. Positions V2320–A2564 constitute a Thioester reductase (TE) domain.

Requires pantetheine 4'-phosphate as cofactor.

Its pathway is secondary metabolite biosynthesis. Functionally, non-reducing polyketide synthase; part of the gene cluster that mediates the biosynthesis of azaphilone pigments (MonAzPs), a complex mixture of compounds with a common azaphilone skeleton very widely used as food colorants. PigA catalyzes the first step of MonAzPs biosynthesis and forms the hexaketide precursor from successive condensations of five malonyl-CoA units, with a simple acetyl-CoA starter unit. The starter acyl transferase (SAT) domain of pigA selects an acetyl-CoA starter unit, and the ketoacyl synthase (KS)-acyl transferase (AT)-acyl carrier protein (ACP) domains extend this starter unit five times with malonyl-CoA in five successive decarboxylative Claisen condensation cycles. The methyltransferase (MT) domain conducts a single C-methylation at C-4, most likely at the pentaketide stage. The reactive hexaketide chain then undergoes a product template (PT) domain-mediated C-2 to C-7 aldol cyclization to afford the first aromatic ring, followed by reductive release of the first pathway intermediate by the NADPH-dependent reductive release (R) domain. The role of esterase pigG is not clear, but it may play at most a supplementary role in the formation of the benzaldehyde produced by the pigA nrPKS. This very reactive benzaldehyde is intercepted by the pigC ketoreductase that to provide the first stable enzyme-free MonAzPs intermediate, 6-(4-hydroxy-2-oxopentyl)-3-methyl-2,4-dioxocyclohexane carbaldehyde, also known as M7PKS-1. The FAD-dependent monooxygenase pigN hydroxylates M7PKS-1 at C-4, which triggers the formation of the pyran ring. PigJ, pigK and pigD are involved in the acetylation of the pyran ring. PigJ and pigK form the two subunits of a dedicated fungal FAS that produces the side chain fatty acyl moiety of MonAzPs and pigD transfers the fatty acyl chain to the C-4 alcohol. PigM and pigO are involved in the elimination of the omega-1 alcohol. PigM acts as an O-acetyltransferase that synthesizes the putative O-11 acetyl intermediate whereas pigO eliminates acetic acid to yield an intermediate with a C10(11) double bond. The dehydration of the C-11 alcohol followed by the reduction of the C6(7) double bond by the NAD(P)H-dependent oxidoreductase pigE increases the electrophilicity of the C-5 ketone of the resulting acyl benzopyran. This in turn sets up the C-5 ketone for an intramolecular Knoevenagel aldol condensation with the C-20 enol of the side chain. This condensation affords the characteristic linear tricyclic carbon skeletons of the yellow pigments that serve as the common precursors for the classical yellow pigments monascin and ankaflavin, orange pigments rubopunctatin and monascorubrin, and red pigments ribropunctamine and monascorubramine. The FAD-dependent oxidoreductase pigF is especially invoved in the biosynthesis of orange and red pigments via desaturation of C6(7). The chain is Non-reducing polyketide synthase pigA from Monascus ruber (Mold).